The chain runs to 75 residues: uncharacterized protein (75 aa).

Belongs to the HSBP1 family.

This is an uncharacterized protein from Schizosaccharomyces pombe (strain 972 / ATCC 24843) (Fission yeast).